The primary structure comprises 865 residues: Centrosomal protein of 97 kDa (865 aa).

8 LRR repeats span residues 37–58 (DIHT…EKCK), 59–80 (RLIQ…AKLT), 81–102 (LLRV…KELV), 103–124 (HLEW…NSCT), 125–146 (ALQH…SKLV), 147–168 (SLKT…PAYL), 171–192 (SLAI…SFLA), and 196–205 (ELEQLSIMNN). Positions 211–249 (TPSIPGFDYRPYIVSWCLNLRVLDGYVISQKESLKAEWL) constitute an LRRCT domain. Residues 300–750 (HQRQLMNQSQ…RYGKESDLGD (451 aa)) are CCP110-binding. Residues Ser-308, Ser-413, and Ser-500 each carry the phosphoserine modification. Residues 506-529 (ESTEQKQSDIKKPENTQPENKETI) are disordered. Residues 508-527 (TEQKQSDIKKPENTQPENKE) are compositionally biased toward basic and acidic residues. Phosphoserine is present on Ser-530. Residue Thr-542 is modified to Phosphothreonine. One can recognise an IQ domain in the interval 558–587 (LNDAATKLQACWRGFYARNYNPQAKDVRYE). Residues 587–865 (EIRLRRMQEH…FQLLHVGVTV (279 aa)) are interaction with MPHOSPH9. Positions 715-769 (QHSLDFEKSSTEGSESSIMGNSIDTVRYGKESDLGDVSEEHGEWNKESSNNEQDN) are disordered. Residues 725-738 (TEGSESSIMGNSID) are compositionally biased toward polar residues. The span at 741 to 760 (RYGKESDLGDVSEEHGEWNK) shows a compositional bias: basic and acidic residues. The residue at position 763 (Ser-763) is a Phosphoserine.

In terms of assembly, interacts with CALM1, CEP76, KIF24 and TALPID3. Interacts with CCP110. ENKD1 competes with CEP97 for binding to CCP110, destabilizing the interaction between CP110 and CEP97 which promotes the removal of CCP110 and CEP97 from the mother centriole and allows the initiation of ciliogenesis. Via its interaction with CCP110, may indirectly interact with HERC2 and NEURL4. Interacts with MPHOSPH9.

The protein resides in the cytoplasm. It localises to the cytoskeleton. The protein localises to the microtubule organizing center. It is found in the centrosome. Its subcellular location is the centriole. In terms of biological role, acts as a key negative regulator of ciliogenesis in collaboration with CCP110 by capping the mother centriole thereby preventing cilia formation. Required for recruitment of CCP110 to the centrosome. The protein is Centrosomal protein of 97 kDa (CEP97) of Homo sapiens (Human).